The sequence spans 342 residues: tRNA dimethylallyltransferase (342 aa).

An ATP-binding site is contributed by 39–46 (GPTGSGKT). Substrate is bound at residue 41-46 (TGSGKT). The interaction with substrate tRNA stretch occupies residues 64–67 (DSMQ).

It belongs to the IPP transferase family. As to quaternary structure, monomer. The cofactor is Mg(2+).

It catalyses the reaction adenosine(37) in tRNA + dimethylallyl diphosphate = N(6)-dimethylallyladenosine(37) in tRNA + diphosphate. Functionally, catalyzes the transfer of a dimethylallyl group onto the adenine at position 37 in tRNAs that read codons beginning with uridine, leading to the formation of N6-(dimethylallyl)adenosine (i(6)A). In Chlamydia abortus (strain DSM 27085 / S26/3) (Chlamydophila abortus), this protein is tRNA dimethylallyltransferase.